A 136-amino-acid chain; its full sequence is Histone H3-like 3 (136 aa).

Residues Met1–Lys15 are compositionally biased toward basic residues. The disordered stretch occupies residues Met1 to Tyr42. An N6,N6,N6-trimethyllysine; alternate mark is found at Lys5 and Lys10. N6,N6-dimethyllysine; alternate is present on residues Lys5 and Lys10. N6-methyllysine; alternate is present on residues Lys5 and Lys10. Lys10 bears the N6-acetyllysine; alternate mark. Ser11 bears the Phosphoserine mark. At Lys15 the chain carries N6-acetyllysine. N6-methyllysine; alternate is present on residues Lys24 and Lys28. Lys24 carries the post-translational modification N6-acetyllysine; alternate. Lys28 carries the post-translational modification N6,N6,N6-trimethyllysine; alternate. Position 28 is an N6,N6-dimethyllysine; alternate (Lys28). The residue at position 29 (Ser29) is a Phosphoserine. Lys37 carries the N6,N6,N6-trimethyllysine; alternate modification. An N6,N6-dimethyllysine; alternate modification is found at Lys37. Lys37 carries the N6-methyllysine; alternate modification.

It belongs to the histone H3 family. The nucleosome is a histone octamer containing two molecules each of H2A, H2B, H3 and H4 assembled in one H3-H4 heterotetramer and two H2A-H2B heterodimers. The octamer wraps approximately 147 bp of DNA. Expressed in roots, seedlings, leaves and open flowers.

The protein localises to the nucleus. It localises to the chromosome. In terms of biological role, core component of nucleosome. Nucleosomes wrap and compact DNA into chromatin, limiting DNA accessibility to the cellular machineries which require DNA as a template. Histones thereby play a central role in transcription regulation, DNA repair, DNA replication and chromosomal stability. DNA accessibility is regulated via a complex set of post-translational modifications of histones, also called histone code, and nucleosome remodeling. The sequence is that of Histone H3-like 3 from Arabidopsis thaliana (Mouse-ear cress).